The primary structure comprises 307 residues: 4-hydroxythreonine-4-phosphate dehydrogenase (307 aa).

Residues histidine 121 and threonine 122 each contribute to the substrate site. A divalent metal cation contacts are provided by histidine 150, histidine 189, and histidine 245. 3 residues coordinate substrate: lysine 253, asparagine 262, and arginine 271.

The protein belongs to the PdxA family. Homodimer. Zn(2+) serves as cofactor. It depends on Mg(2+) as a cofactor. Requires Co(2+) as cofactor.

It localises to the cytoplasm. It carries out the reaction 4-(phosphooxy)-L-threonine + NAD(+) = 3-amino-2-oxopropyl phosphate + CO2 + NADH. It participates in cofactor biosynthesis; pyridoxine 5'-phosphate biosynthesis; pyridoxine 5'-phosphate from D-erythrose 4-phosphate: step 4/5. In terms of biological role, catalyzes the NAD(P)-dependent oxidation of 4-(phosphooxy)-L-threonine (HTP) into 2-amino-3-oxo-4-(phosphooxy)butyric acid which spontaneously decarboxylates to form 3-amino-2-oxopropyl phosphate (AHAP). In Sulfurimonas denitrificans (strain ATCC 33889 / DSM 1251) (Thiomicrospira denitrificans (strain ATCC 33889 / DSM 1251)), this protein is 4-hydroxythreonine-4-phosphate dehydrogenase.